A 116-amino-acid chain; its full sequence is Ribosome-binding factor A (116 aa).

It belongs to the RbfA family. In terms of assembly, monomer. Binds 30S ribosomal subunits, but not 50S ribosomal subunits or 70S ribosomes.

Its subcellular location is the cytoplasm. In terms of biological role, one of several proteins that assist in the late maturation steps of the functional core of the 30S ribosomal subunit. Associates with free 30S ribosomal subunits (but not with 30S subunits that are part of 70S ribosomes or polysomes). Required for efficient processing of 16S rRNA. May interact with the 5'-terminal helix region of 16S rRNA. The polypeptide is Ribosome-binding factor A (Clostridium botulinum (strain Eklund 17B / Type B)).